Consider the following 150-residue polypeptide: D-aminoacyl-tRNA deacylase (150 aa).

A Gly-cisPro motif, important for rejection of L-amino acids motif is present at residues 137-138 (GP).

It belongs to the DTD family. Homodimer.

It localises to the cytoplasm. It carries out the reaction glycyl-tRNA(Ala) + H2O = tRNA(Ala) + glycine + H(+). The enzyme catalyses a D-aminoacyl-tRNA + H2O = a tRNA + a D-alpha-amino acid + H(+). Functionally, an aminoacyl-tRNA editing enzyme that deacylates mischarged D-aminoacyl-tRNAs. Also deacylates mischarged glycyl-tRNA(Ala), protecting cells against glycine mischarging by AlaRS. Acts via tRNA-based rather than protein-based catalysis; rejects L-amino acids rather than detecting D-amino acids in the active site. By recycling D-aminoacyl-tRNA to D-amino acids and free tRNA molecules, this enzyme counteracts the toxicity associated with the formation of D-aminoacyl-tRNA entities in vivo and helps enforce protein L-homochirality. This chain is D-aminoacyl-tRNA deacylase, found in Heliobacterium modesticaldum (strain ATCC 51547 / Ice1).